The sequence spans 239 residues: N-glycosylase/DNA lyase (239 aa).

8-oxoguanine-binding residues include Gln24, Ser51, and Trp62. A helix-hairpin-helix region spans residues 118–182 (ERYYEDMTLL…EDVRIIKLTR (65 aa)). The active-site Schiff-base intermediate with DNA is the Lys142. The 8-oxoguanine site is built by Phe146 and Pro172. Residue Asp174 is part of the active site. Residues Asp208 and Trp212 each coordinate 8-oxoguanine.

The protein belongs to the archaeal N-glycosylase/DNA lyase (AGOG) family.

The enzyme catalyses 2'-deoxyribonucleotide-(2'-deoxyribose 5'-phosphate)-2'-deoxyribonucleotide-DNA = a 3'-end 2'-deoxyribonucleotide-(2,3-dehydro-2,3-deoxyribose 5'-phosphate)-DNA + a 5'-end 5'-phospho-2'-deoxyribonucleoside-DNA + H(+). DNA repair enzyme that is part of the base excision repair (BER) pathway; protects from oxidative damage by removing the major product of DNA oxidation, 8-oxoguanine (GO), from single- and double-stranded DNA substrates. The sequence is that of N-glycosylase/DNA lyase from Pyrococcus horikoshii (strain ATCC 700860 / DSM 12428 / JCM 9974 / NBRC 100139 / OT-3).